The primary structure comprises 329 residues: UDP-glucose 4-epimerase (329 aa).

NAD(+)-binding positions include 13-14, 33-38, 53-54, 76-80, asparagine 95, threonine 120, tyrosine 144, lysine 148, and phenylalanine 172; these read YV, HNLSTG, DI, and FAAFS. Substrate-binding residues include threonine 120 and tyrosine 144. The active-site Proton acceptor is tyrosine 144. Substrate contacts are provided by residues asparagine 173, 190 to 191, 207 to 209, arginine 221, and 281 to 284; these read HL, SVY, and RGRD.

The protein belongs to the NAD(P)-dependent epimerase/dehydratase family. Homodimer. It depends on NAD(+) as a cofactor.

It catalyses the reaction UDP-alpha-D-glucose = UDP-alpha-D-galactose. The protein operates within carbohydrate metabolism; galactose metabolism. In terms of biological role, involved in the metabolism of galactose. Catalyzes the conversion of UDP-galactose (UDP-Gal) to UDP-glucose (UDP-Glc) through a mechanism involving the transient reduction of NAD. In Streptomyces lividans, this protein is UDP-glucose 4-epimerase (galE).